Here is a 320-residue protein sequence, read N- to C-terminus: Cytochrome f (320 aa).

The signal sequence occupies residues 1-35 (MQNRNTFSWVKEQMTRFISVSIMIYVITRTSISNA). Heme contacts are provided by Tyr36, Cys56, Cys59, and His60. A helical transmembrane segment spans residues 286–306 (VQGLLFFLASVILAQIFLVLK).

This sequence belongs to the cytochrome f family. In terms of assembly, the 4 large subunits of the cytochrome b6-f complex are cytochrome b6, subunit IV (17 kDa polypeptide, petD), cytochrome f and the Rieske protein, while the 4 small subunits are PetG, PetL, PetM and PetN. The complex functions as a dimer. Heme is required as a cofactor.

It localises to the plastid. The protein localises to the chloroplast thylakoid membrane. In terms of biological role, component of the cytochrome b6-f complex, which mediates electron transfer between photosystem II (PSII) and photosystem I (PSI), cyclic electron flow around PSI, and state transitions. The protein is Cytochrome f of Liriodendron tulipifera (Tuliptree).